Here is a 192-residue protein sequence, read N- to C-terminus: uncharacterized protein (192 aa).

This is an uncharacterized protein from Magallana gigas (Pacific oyster).